The following is a 345-amino-acid chain: MSYLIKPAGYKALLNLSQTEMGIKKIKDFFQQNLSSELRLRRVTAPLFVLKGMGINDDLNGTERAVTFPIKDLNDSKAEIVHSLAKWKRLTLADYHIEEGYGIYTDMNAIRSDEELGNLHSLYVDQWDWERVMSESERKIDFLKEIVRRIYAAMVRTEYLVYEMFPQIRPTLPQQIHFIHSEDLLQKYPTFTPKEREDAITKEYGAVFIIGIGCSLSNGEKHDGRAPDYDDWSTIAENGQTGLNGDLLVWDDVLNRSMELSSMGIRVNKEALLRQLDICKAGEKKELYFHKRLLSGELPQSIGGGIGQSRLCMFYLRKAHIGEIQASIWPEEMRKEARAAGMMLI.

This sequence belongs to the class-II aminoacyl-tRNA synthetase family. AsnA subfamily.

It is found in the cytoplasm. The enzyme catalyses L-aspartate + NH4(+) + ATP = L-asparagine + AMP + diphosphate + H(+). Its pathway is amino-acid biosynthesis; L-asparagine biosynthesis; L-asparagine from L-aspartate (ammonia route): step 1/1. The chain is Aspartate--ammonia ligase from Parabacteroides distasonis (strain ATCC 8503 / DSM 20701 / CIP 104284 / JCM 5825 / NCTC 11152).